Consider the following 554-residue polypeptide: RecBCD enzyme subunit RecD (554 aa).

155–162 serves as a coordination point for ATP; sequence GGPGTGKT.

This sequence belongs to the RecD family. As to quaternary structure, heterotrimer of RecB, RecC and RecD. All subunits contribute to DNA-binding.

The catalysed reaction is Couples ATP hydrolysis with the unwinding of duplex DNA at the replication fork by translocating in the 5'-3' direction. This creates two antiparallel DNA single strands (ssDNA). The leading ssDNA polymer is the template for DNA polymerase III holoenzyme which synthesizes a continuous strand.. It catalyses the reaction ATP + H2O = ADP + phosphate + H(+). Functionally, a helicase/nuclease that prepares dsDNA breaks (DSB) for recombinational DNA repair. Binds to DSBs and unwinds DNA via a highly rapid and processive ATP-dependent bidirectional helicase activity. Holoenzyme degrades any linearized DNA that is unable to undergo homologous recombination. In the holoenzyme this subunit has ssDNA-dependent ATPase and 5'-3' helicase activity. When added to pre-assembled RecBC greatly stimulates nuclease activity and augments holoenzyme processivity. Unlike the case in E.coli, suppresses RecA-dependent homologous recombination, is instead required for single-strand annealing pathway repair of DSB. This chain is RecBCD enzyme subunit RecD, found in Mycolicibacterium smegmatis (strain ATCC 700084 / mc(2)155) (Mycobacterium smegmatis).